The sequence spans 393 residues: Phospholipid-transporting ATPase accessory subunit CRF1 (393 aa).

Over 1 to 46 (MGLILRWKEKKQLSSKQNAQKSRKPANTSFRQQRLKAWQPILSPQS) the chain is Cytoplasmic. Residues 47 to 67 (VLPLLILMACVFAPIGIGLVV) form a helical membrane-spanning segment. At 68-334 (STISVQRLVV…NSIIGAGNEA (267 aa)) the chain is on the lumenal side. The confers specificity for binding DNF3 stretch occupies residues 70-332 (ISVQRLVVNY…TTNSIIGAGN (263 aa)). N-linked (GlcNAc...) asparagine glycosylation is found at Asn-78, Asn-123, Asn-187, Asn-202, Asn-213, Asn-240, and Asn-291. Cystine bridges form between Cys-82/Cys-126 and Cys-179/Cys-193. Residues 335–355 (LGIVYLIVAGIATLFAILFLI) traverse the membrane as a helical segment. Residues 356-393 (KVIFKPRPMHDHSYLNFENSDTPFDESSVVSIPLREIL) lie on the Cytoplasmic side of the membrane.

Belongs to the CDC50/LEM3 family. Component of a flippase complex consisting of DNF3 and YNR048W/CRF1. Interacts with DNF3; the interaction is direct and required for proper expression and endoplasmic reticulum (ER) export of either partner.

Its subcellular location is the golgi apparatus. It is found in the trans-Golgi network membrane. Functionally, accessory component of a P4-ATPase flippase complex which catalyzes the hydrolysis of ATP coupled to the transport of phosphatidylcholine and small amounts of phosphatidylethanolamine from the lumen to the cytosolic leaflet of the trans-Golgi network and ensures the maintenance of asymmetric distribution of phospholipids. May be involved in transport from early endosomes to the trans-Golgi network (TGN). The polypeptide is Phospholipid-transporting ATPase accessory subunit CRF1 (Saccharomyces cerevisiae (strain ATCC 204508 / S288c) (Baker's yeast)).